Reading from the N-terminus, the 552-residue chain is Nucleoside-diphosphatase mig-23 (552 aa).

Residues 1-6 lie on the Cytoplasmic side of the membrane; sequence MRVSLR. A helical transmembrane segment spans residues 7–27; it reads FTILAVSAMIFFPVIVFIYVV. Residues 28 to 489 are Lumenal-facing; sequence EAHTSPKVIA…IVKETHSSSE (462 aa). Glu-174 acts as the Proton acceptor in catalysis. N-linked (GlcNAc...) asparagine glycosylation is found at Asn-190 and Asn-284. A helical transmembrane segment spans residues 490-510; sequence SLWAPLFFLSAVFCLFVLVCA. Residues 511–552 are Cytoplasmic-facing; sequence KEQSVLCFDDKRRSSFGMSRSQYSYKMLKENRTSSSFLENFA.

The protein belongs to the GDA1/CD39 NTPase family. In terms of tissue distribution, expressed in body wall muscles.

It localises to the golgi apparatus membrane. It carries out the reaction a ribonucleoside 5'-diphosphate + H2O = a ribonucleoside 5'-phosphate + phosphate + H(+). Its function is as follows. Seems to be able to hydrolyze ADP, UDP and GDP. Supports mig-17 glycosylation and surface expression, which is required for proper migration of distal tip cells during gonad morphogenesis. In Caenorhabditis elegans, this protein is Nucleoside-diphosphatase mig-23 (mig-23).